The chain runs to 320 residues: Serpentine receptor class delta-40 (320 aa).

7 helical membrane-spanning segments follow: residues 12–32 (IFYPIFFIFSTITQLMLIYLI), 42–62 (MLKVFLLNTSLFQIILVVVSC), 95–115 (YQVLQTSAFMSGMSILITFVF), 133–153 (IILLFHMPIIASMVMEVIMVI), 189–209 (LINFLLISGSVVASPFISFFF), 243–263 (AFLPLIFYVPVFGLYFYCILT), and 273–293 (FMTVVPCLPAFFDPMLTLYFV).

Belongs to the nematode receptor-like protein srd family.

It is found in the membrane. This Caenorhabditis elegans protein is Serpentine receptor class delta-40 (srd-40).